We begin with the raw amino-acid sequence, 235 residues long: MKKLSKRMAALSTKIEDRIYPPLEALSIIKENANAKFDETIEAHIRLGIDPKYTDQQLRTTVALPHGTGQSIKIAVITSGENVSKAKSAGADLFGEEDLVESINKGNMDFDLLIATPDMMPKVAKLGRVLGPRGLMPNPKAGTVTNDIANAIKEFKAGKLEFRADKAGIVHVRFGKASFTKEALFDNLKTLQESIDKNKPSGSKGKYWKSFYVTSTMGPSVQVDISAVQDYQPEG.

The protein belongs to the universal ribosomal protein uL1 family. Part of the 50S ribosomal subunit.

In terms of biological role, binds directly to 23S rRNA. The L1 stalk is quite mobile in the ribosome, and is involved in E site tRNA release. Its function is as follows. Protein L1 is also a translational repressor protein, it controls the translation of the L11 operon by binding to its mRNA. This Prochlorococcus marinus (strain MIT 9312) protein is Large ribosomal subunit protein uL1.